The sequence spans 1253 residues: Cytoplasmic FMR1-interacting protein 1 (1253 aa).

Ser583 is subject to Phosphoserine. The segment at 724–732 (DKRLRSECK) is EIF4E-binding. Thr1234 carries the phosphothreonine modification.

This sequence belongs to the CYFIP family. Component of the WAVE1 complex composed of ABI2, CYFIP1 or CYFIP2, BRK1, NCKAP1 and WASF1/WAVE1. Within the complex, a heterodimer containing NCKAP1 and CYFIP1 interacts with a heterotrimer formed by WAVE1, ABI2 and BRK1. Component of the CYFIP1-EIF4E-FMR1 complex which is composed of CYFIP, EIF4E and FMR1. Interacts with FMR1 but does not bind to related proteins FXR1 or FXR2. Interaction with EIF4E stimulates FMR1 binding. Component of the WAVE2 complex composed of ABI1, CYFIP1/SRA1, NCKAP1/NAP1 (NCKAP1L/HEM1 in hematopoietic cells) and WASF2/WAVE2. Interacts with the active GTP-bound form of RAC1. Interacts through its C-terminus with the C-terminus of DPYSL2/CRMP2 which is necessary for DPYSL2-induced axon outgrowth. Interacts with NYAP1, NYAP2 and MYO16. Interacts with TMEM108 (via N-terminus); the interaction associates TMEM108 with the WAVE1 complex. In terms of tissue distribution, highly expressed in embryonic and adult developing nervous system.

It is found in the cytoplasm. The protein resides in the perinuclear region. The protein localises to the cell projection. Its subcellular location is the lamellipodium. It localises to the ruffle. It is found in the synapse. The protein resides in the synaptosome. Component of the CYFIP1-EIF4E-FMR1 complex which binds to the mRNA cap and mediates translational repression. In the CYFIP1-EIF4E-FMR1 complex this subunit is an adapter between EIF4E and FMR1. Promotes the translation repression activity of FMR1 in brain probably by mediating its association with EIF4E and mRNA. Regulates formation of membrane ruffles and lamellipodia. Plays a role in axon outgrowth. Binds to F-actin but not to RNA. Part of the WAVE complex that regulates actin filament reorganization via its interaction with the Arp2/3 complex. Actin remodeling activity is regulated by RAC1. Regulator of epithelial morphogenesis. May act as an invasion suppressor in cancers. As component of the WAVE1 complex, required for BDNF-NTRK2 endocytic trafficking and signaling from early endosomes. The sequence is that of Cytoplasmic FMR1-interacting protein 1 from Mus musculus (Mouse).